The following is a 545-amino-acid chain: ATP synthase subunit alpha (545 aa).

173–180 (GDRQTGKS) serves as a coordination point for ATP.

Belongs to the ATPase alpha/beta chains family. F-type ATPases have 2 components, CF(1) - the catalytic core - and CF(0) - the membrane proton channel. CF(1) has five subunits: alpha(3), beta(3), gamma(1), delta(1), epsilon(1). CF(0) has three main subunits: a(1), b(2) and c(9-12). The alpha and beta chains form an alternating ring which encloses part of the gamma chain. CF(1) is attached to CF(0) by a central stalk formed by the gamma and epsilon chains, while a peripheral stalk is formed by the delta and b chains.

The protein localises to the cell membrane. It catalyses the reaction ATP + H2O + 4 H(+)(in) = ADP + phosphate + 5 H(+)(out). Functionally, produces ATP from ADP in the presence of a proton gradient across the membrane. The alpha chain is a regulatory subunit. In Arthrobacter sp. (strain FB24), this protein is ATP synthase subunit alpha.